Here is a 240-residue protein sequence, read N- to C-terminus: Protein MGARP (240 aa).

Topologically, residues 1 to 45 (MYLRRAVSKTLALPLRAPPGPAPLRKDASLRWISSNKFPGSSGSN) are cytoplasmic. Residues 46–64 (MIYYLVVGVTVSAGGYYTY) form a helical; Anchor for type IV membrane protein membrane-spanning segment. Residues 65–240 (KRVTSGKAKR…AGSEAASAQG (176 aa)) are Mitochondrial intermembrane-facing. Residues 72-240 (AKRSDHVTDL…AGSEAASAQG (169 aa)) are disordered. A compositionally biased stretch (basic and acidic residues) spans 73–87 (KRSDHVTDLKEKTKA). Composition is skewed to low complexity over residues 166 to 183 (TVET…VTST) and 228 to 240 (EACA…SAQG).

As to quaternary structure, interacts with RHOT1/Miro-1, RHOT2/Miro-2, TRAK1/OIP106 and TRAK2/GRIF1.

It localises to the mitochondrion. Its subcellular location is the mitochondrion outer membrane. The protein resides in the mitochondrion inner membrane. In terms of biological role, plays a role in the trafficking of mitochondria along microtubules. Regulates the kinesin-mediated axonal transport of mitochondria to nerve terminals along microtubules during hypoxia. Participates in the translocation of TRAK2/GRIF1 from the cytoplasm to the mitochondrion. Also plays a role in steroidogenesis through maintenance of mitochondrial abundance and morphology. Plays an inhibitory role during neocortex development by regulating mitochondrial morphology, distribution and motility in neocortical neurons. The sequence is that of Protein MGARP (MGARP) from Bos taurus (Bovine).